The following is a 300-amino-acid chain: UDP-N-acetylenolpyruvoylglucosamine reductase (300 aa).

In terms of domain architecture, FAD-binding PCMH-type spans 28–190 (KIGGRVKYLV…TRAMMSFKKE (163 aa)). Residue Arg-169 is part of the active site. The active-site Proton donor is Ser-219. The active site involves Glu-290.

The protein belongs to the MurB family. The cofactor is FAD.

Its subcellular location is the cytoplasm. The catalysed reaction is UDP-N-acetyl-alpha-D-muramate + NADP(+) = UDP-N-acetyl-3-O-(1-carboxyvinyl)-alpha-D-glucosamine + NADPH + H(+). Its pathway is cell wall biogenesis; peptidoglycan biosynthesis. In terms of biological role, cell wall formation. This is UDP-N-acetylenolpyruvoylglucosamine reductase from Thermotoga sp. (strain RQ2).